A 92-amino-acid polypeptide reads, in one-letter code: PqqA binding protein (92 aa).

The protein belongs to the PqqD family. In terms of assembly, monomer. Interacts with PqqE.

It participates in cofactor biosynthesis; pyrroloquinoline quinone biosynthesis. Functionally, functions as a PqqA binding protein and presents PqqA to PqqE, in the pyrroloquinoline quinone (PQQ) biosynthetic pathway. The chain is PqqA binding protein from Xanthomonas campestris pv. campestris (strain B100).